The following is a 161-amino-acid chain: RNA pyrophosphohydrolase (161 aa).

Positions 12-154 (PYRPGVGMMI…KRKLYQAVVK (143 aa)) constitute a Nudix hydrolase domain. The Nudix box motif lies at 46 to 67 (GGIVPGETPSIAAMREMLEEIG).

The protein belongs to the Nudix hydrolase family. RppH subfamily. The cofactor is a divalent metal cation.

In terms of biological role, accelerates the degradation of transcripts by removing pyrophosphate from the 5'-end of triphosphorylated RNA, leading to a more labile monophosphorylated state that can stimulate subsequent ribonuclease cleavage. This chain is RNA pyrophosphohydrolase, found in Rickettsia conorii (strain ATCC VR-613 / Malish 7).